The chain runs to 188 residues: Protein GrpE (188 aa).

The interval 1 to 30 (MTKKTSHHKAEQKEKRAGEESGRESEVLDH) is disordered. The span at 8-30 (HKAEQKEKRAGEESGRESEVLDH) shows a compositional bias: basic and acidic residues.

This sequence belongs to the GrpE family. In terms of assembly, homodimer.

It is found in the cytoplasm. Its function is as follows. Participates actively in the response to hyperosmotic and heat shock by preventing the aggregation of stress-denatured proteins, in association with DnaK and GrpE. It is the nucleotide exchange factor for DnaK and may function as a thermosensor. Unfolded proteins bind initially to DnaJ; upon interaction with the DnaJ-bound protein, DnaK hydrolyzes its bound ATP, resulting in the formation of a stable complex. GrpE releases ADP from DnaK; ATP binding to DnaK triggers the release of the substrate protein, thus completing the reaction cycle. Several rounds of ATP-dependent interactions between DnaJ, DnaK and GrpE are required for fully efficient folding. The protein is Protein GrpE of Chlorobium phaeobacteroides (strain BS1).